A 530-amino-acid chain; its full sequence is Hyalin (530 aa).

HYR domains are found at residues 1–66 (NVEI…TVTA), 67–150 (TDSI…NVVE), 151–234 (VDTT…NVVE), 235–319 (VDTT…NVVE), 320–403 (VDTT…NIVE), 404–486 (EDTT…TVNT), and 487–530 (VDTT…ASLV).

Homooligomer in presence of calcium. In terms of processing, glycosylated.

It localises to the secreted. Its subcellular location is the extracellular space. The protein resides in the extracellular matrix. In terms of biological role, major constituent of the hyaline layer. The hyaline layer of echinoderm embryos is an extraembryonic matrix that functions as a substrate for cell adhesion through early development. The chain is Hyalin from Lytechinus variegatus (Green sea urchin).